Consider the following 373-residue polypeptide: Bilirubin reductase (373 aa).

Gln-92 serves as a coordination point for FMN. Arg-168 functions as the Proton donor in the catalytic mechanism. Lys-215 lines the FMN pocket. Positions 344, 347, 351, and 363 each coordinate [4Fe-4S] cluster.

The protein belongs to the NADH:flavin oxidoreductase/NADH oxidase family. It depends on FMN as a cofactor. Requires [4Fe-4S] cluster as cofactor.

It carries out the reaction urobilinogen + 4 A = (4Z,15Z)-bilirubin IXalpha + 4 AH2. The enzyme catalyses urobilinogen + 2 A = (4Z,15Z)-mesobilirubin IXalpha + 2 AH2. Its pathway is porphyrin-containing compound metabolism; protoheme degradation. In terms of biological role, bilirubin reductase that catalyzes reduction of mesobilirubin and/or bilirubin to urobilinogen, a key step during heme degradation. Cooperates with BilS, which is probably involved in electron transfer for BilR. Urobilinogen then spontaneously degrades into urobilin, which gives urine its distinctive yellow color. The chain is Bilirubin reductase from Clostridium symbiosum (strain WAL-14163).